We begin with the raw amino-acid sequence, 299 residues long: N-acetylaspartate synthetase (299 aa).

Pro residues predominate over residues 44-57 (AAPGPAAAPPPAAG). The tract at residues 44-70 (AAPGPAAAPPPAAGPQPHGGTGGAGPP) is disordered. Residues 60-70 (PHGGTGGAGPP) are compositionally biased toward gly residues. The chain crosses the membrane as a helical span at residues 118–138 (YALLAALCFAVTRSLLLTCLV). Positions 143-280 (LALRYYYSRK…VLPGMTLSLA (138 aa)) constitute an N-acetyltransferase domain.

It belongs to the NAT8 family. As to expression, expressed in brain, kidney, liver and spleen. In brain, present in neurons but not in astrocytes (at protein level). Expressed in brain, thymus and spleen.

It localises to the cytoplasm. The protein resides in the microsome membrane. It is found in the mitochondrion membrane. Its subcellular location is the endoplasmic reticulum membrane. The enzyme catalyses L-aspartate + acetyl-CoA = N-acetyl-L-aspartate + CoA + H(+). With respect to regulation, aminooxyacetic acid (AOAA) blocks its activity in both cytoplasm and mitochondria. Its function is as follows. Catalyzes the synthesis of N-acetylaspartate acid (NAA) from L-aspartate and acetyl-CoA. Promotes dopamine uptake by regulating TNF-alpha expression. Attenuates methamphetamine-induced inhibition of dopamine uptake. This Mus musculus (Mouse) protein is N-acetylaspartate synthetase (Nat8l).